The following is a 297-amino-acid chain: Ribosomal protein L11 methyltransferase (297 aa).

S-adenosyl-L-methionine contacts are provided by Thr152, Gly173, Asp195, and Asn234.

The protein belongs to the methyltransferase superfamily. PrmA family.

Its subcellular location is the cytoplasm. The enzyme catalyses L-lysyl-[protein] + 3 S-adenosyl-L-methionine = N(6),N(6),N(6)-trimethyl-L-lysyl-[protein] + 3 S-adenosyl-L-homocysteine + 3 H(+). Its function is as follows. Methylates ribosomal protein L11. The polypeptide is Ribosomal protein L11 methyltransferase (Cupriavidus pinatubonensis (strain JMP 134 / LMG 1197) (Cupriavidus necator (strain JMP 134))).